The following is a 273-amino-acid chain: Proteasome subunit alpha (273 aa).

A disordered region spans residues 231 to 273 (DDGAAGQPPSSSDTDTSAAEARKPTASAGSADLEGPEPERPDS). Positions 238-249 (PPSSSDTDTSAA) are enriched in low complexity.

This sequence belongs to the peptidase T1A family. The 20S proteasome core is composed of 14 alpha and 14 beta subunits that assemble into four stacked heptameric rings, resulting in a barrel-shaped structure. The two inner rings, each composed of seven catalytic beta subunits, are sandwiched by two outer rings, each composed of seven alpha subunits. The catalytic chamber with the active sites is on the inside of the barrel. Has a gated structure, the ends of the cylinder being occluded by the N-termini of the alpha-subunits. Is capped by the proteasome-associated ATPase, ARC.

The protein resides in the cytoplasm. It functions in the pathway protein degradation; proteasomal Pup-dependent pathway. With respect to regulation, the formation of the proteasomal ATPase ARC-20S proteasome complex, likely via the docking of the C-termini of ARC into the intersubunit pockets in the alpha-rings, may trigger opening of the gate for substrate entry. Interconversion between the open-gate and close-gate conformations leads to a dynamic regulation of the 20S proteasome proteolysis activity. Component of the proteasome core, a large protease complex with broad specificity involved in protein degradation. This Salinispora arenicola (strain CNS-205) protein is Proteasome subunit alpha.